Consider the following 247-residue polypeptide: Geranylgeranylglyceryl phosphate synthase (247 aa).

Residues Asp-23 and Ser-52 each contribute to the Mg(2+) site. Sn-glycerol 1-phosphate-binding positions include 171 to 177 (YLEAGSG), 203 to 204 (GG), and 225 to 226 (GT).

This sequence belongs to the GGGP/HepGP synthase family. Group II subfamily. Mg(2+) serves as cofactor.

The protein localises to the cytoplasm. It carries out the reaction sn-glycerol 1-phosphate + (2E,6E,10E)-geranylgeranyl diphosphate = sn-3-O-(geranylgeranyl)glycerol 1-phosphate + diphosphate. The protein operates within membrane lipid metabolism; glycerophospholipid metabolism. Its function is as follows. Prenyltransferase that catalyzes the transfer of the geranylgeranyl moiety of geranylgeranyl diphosphate (GGPP) to the C3 hydroxyl of sn-glycerol-1-phosphate (G1P). This reaction is the first ether-bond-formation step in the biosynthesis of archaeal membrane lipids. The chain is Geranylgeranylglyceryl phosphate synthase from Methanosarcina mazei (strain ATCC BAA-159 / DSM 3647 / Goe1 / Go1 / JCM 11833 / OCM 88) (Methanosarcina frisia).